We begin with the raw amino-acid sequence, 211 residues long: 1-deoxy-D-xylulose 5-phosphate reductoisomerase (211 aa).

A Mn(2+)-binding site is contributed by D14. 1-deoxy-D-xylulose 5-phosphate is bound by residues S15, E16, S40, H63, S76, N81, K82, and E85. A Mn(2+)-binding site is contributed by E16. E85 contributes to the Mn(2+) binding site.

It belongs to the DXR family. Requires Mn(2+) as cofactor. Mg(2+) is required as a cofactor. In terms of tissue distribution, mostly expressed in flowers and, to a lower extent, in leaves.

It localises to the plastid. It is found in the chloroplast stroma. It catalyses the reaction 2-C-methyl-D-erythritol 4-phosphate + NADP(+) = 1-deoxy-D-xylulose 5-phosphate + NADPH + H(+). Its pathway is isoprenoid biosynthesis; isopentenyl diphosphate biosynthesis via DXP pathway; isopentenyl diphosphate from 1-deoxy-D-xylulose 5-phosphate: step 1/6. Its function is as follows. Enzyme of the plastid non-mevalonate pathway for isoprenoid biosynthesis that catalyzes the NADPH-dependent rearrangement and reduction of 1-deoxy-D-xylulose-5-phosphate (DXP) to 2-C-methyl-D-erythritol 4-phosphate (MEP). Required for chloroplast development. In Thymus vulgaris (Thyme), this protein is 1-deoxy-D-xylulose 5-phosphate reductoisomerase.